We begin with the raw amino-acid sequence, 158 residues long: 2-C-methyl-D-erythritol 2,4-cyclodiphosphate synthase (158 aa).

Positions 9 and 11 each coordinate a divalent metal cation. 4-CDP-2-C-methyl-D-erythritol 2-phosphate-binding positions include 9 to 11 (DVH) and 35 to 36 (HS). His43 contributes to the a divalent metal cation binding site. 4-CDP-2-C-methyl-D-erythritol 2-phosphate-binding positions include 57 to 59 (DIG), 62 to 66 (FPDTD), 101 to 107 (AQRPKMA), 133 to 136 (TTTE), Phe140, and Arg143.

Belongs to the IspF family. In terms of assembly, homotrimer. Requires a divalent metal cation as cofactor.

The catalysed reaction is 4-CDP-2-C-methyl-D-erythritol 2-phosphate = 2-C-methyl-D-erythritol 2,4-cyclic diphosphate + CMP. It functions in the pathway isoprenoid biosynthesis; isopentenyl diphosphate biosynthesis via DXP pathway; isopentenyl diphosphate from 1-deoxy-D-xylulose 5-phosphate: step 4/6. In terms of biological role, involved in the biosynthesis of isopentenyl diphosphate (IPP) and dimethylallyl diphosphate (DMAPP), two major building blocks of isoprenoid compounds. Catalyzes the conversion of 4-diphosphocytidyl-2-C-methyl-D-erythritol 2-phosphate (CDP-ME2P) to 2-C-methyl-D-erythritol 2,4-cyclodiphosphate (ME-CPP) with a corresponding release of cytidine 5-monophosphate (CMP). The polypeptide is 2-C-methyl-D-erythritol 2,4-cyclodiphosphate synthase (Lysinibacillus sphaericus (strain C3-41)).